We begin with the raw amino-acid sequence, 79 residues long: RNA-binding protein Hfq (79 aa).

In terms of domain architecture, Sm spans 10–70 (DVFLKTVRKQ…ISTIMPGQPI (61 aa)).

The protein belongs to the Hfq family. In terms of assembly, homohexamer.

Functionally, RNA chaperone that binds small regulatory RNA (sRNAs) and mRNAs to facilitate mRNA translational regulation in response to envelope stress, environmental stress and changes in metabolite concentrations. Also binds with high specificity to tRNAs. The chain is RNA-binding protein Hfq from Bartonella bacilliformis (strain ATCC 35685 / KC583 / Herrer 020/F12,63).